Reading from the N-terminus, the 341-residue chain is tRNA N6-adenosine threonylcarbamoyltransferase (341 aa).

Residues His117 and His121 each contribute to the Fe cation site. Substrate contacts are provided by residues 140–144 (VVSGG), Asp173, Gly186, and Asn278. Fe cation is bound at residue Asp306.

It belongs to the KAE1 / TsaD family. Fe(2+) is required as a cofactor.

It localises to the cytoplasm. The catalysed reaction is L-threonylcarbamoyladenylate + adenosine(37) in tRNA = N(6)-L-threonylcarbamoyladenosine(37) in tRNA + AMP + H(+). Required for the formation of a threonylcarbamoyl group on adenosine at position 37 (t(6)A37) in tRNAs that read codons beginning with adenine. Is involved in the transfer of the threonylcarbamoyl moiety of threonylcarbamoyl-AMP (TC-AMP) to the N6 group of A37, together with TsaE and TsaB. TsaD likely plays a direct catalytic role in this reaction. The protein is tRNA N6-adenosine threonylcarbamoyltransferase of Symbiobacterium thermophilum (strain DSM 24528 / JCM 14929 / IAM 14863 / T).